We begin with the raw amino-acid sequence, 67 residues long: DNA-directed RNA polymerase subunit omega (67 aa).

This sequence belongs to the RNA polymerase subunit omega family. As to quaternary structure, the RNAP catalytic core consists of 2 alpha, 1 beta, 1 beta' and 1 omega subunit. When a sigma factor is associated with the core the holoenzyme is formed, which can initiate transcription.

The catalysed reaction is RNA(n) + a ribonucleoside 5'-triphosphate = RNA(n+1) + diphosphate. Its function is as follows. Promotes RNA polymerase assembly. Latches the N- and C-terminal regions of the beta' subunit thereby facilitating its interaction with the beta and alpha subunits. The sequence is that of DNA-directed RNA polymerase subunit omega from Burkholderia pseudomallei (strain 1106a).